Consider the following 325-residue polypeptide: GTP 3',8-cyclase (325 aa).

The Radical SAM core domain maps to 4-219 (NYNRNINYLR…HGLQQKFGLL (216 aa)). Arginine 13 provides a ligand contact to GTP. [4Fe-4S] cluster-binding residues include cysteine 20 and cysteine 24. Residue tyrosine 26 participates in S-adenosyl-L-methionine binding. Cysteine 27 is a [4Fe-4S] cluster binding site. Arginine 63 provides a ligand contact to GTP. An S-adenosyl-L-methionine-binding site is contributed by glycine 67. Residue threonine 94 coordinates GTP. Serine 118 contributes to the S-adenosyl-L-methionine binding site. A GTP-binding site is contributed by lysine 155. An S-adenosyl-L-methionine-binding site is contributed by methionine 189. Residues cysteine 254 and cysteine 257 each coordinate [4Fe-4S] cluster. GTP is bound at residue 259–261 (RLR). Cysteine 271 is a [4Fe-4S] cluster binding site.

It belongs to the radical SAM superfamily. MoaA family. As to quaternary structure, monomer and homodimer. [4Fe-4S] cluster serves as cofactor.

It catalyses the reaction GTP + AH2 + S-adenosyl-L-methionine = (8S)-3',8-cyclo-7,8-dihydroguanosine 5'-triphosphate + 5'-deoxyadenosine + L-methionine + A + H(+). The protein operates within cofactor biosynthesis; molybdopterin biosynthesis. Functionally, catalyzes the cyclization of GTP to (8S)-3',8-cyclo-7,8-dihydroguanosine 5'-triphosphate. In Desulforamulus reducens (strain ATCC BAA-1160 / DSM 100696 / MI-1) (Desulfotomaculum reducens), this protein is GTP 3',8-cyclase.